Consider the following 118-residue polypeptide: Small ribosomal subunit protein uS13 (118 aa).

Residues S94 to K118 form a disordered region.

It belongs to the universal ribosomal protein uS13 family. In terms of assembly, part of the 30S ribosomal subunit. Forms a loose heterodimer with protein S19. Forms two bridges to the 50S subunit in the 70S ribosome.

In terms of biological role, located at the top of the head of the 30S subunit, it contacts several helices of the 16S rRNA. In the 70S ribosome it contacts the 23S rRNA (bridge B1a) and protein L5 of the 50S subunit (bridge B1b), connecting the 2 subunits; these bridges are implicated in subunit movement. Contacts the tRNAs in the A and P-sites. The protein is Small ribosomal subunit protein uS13 of Shewanella baltica (strain OS223).